The chain runs to 267 residues: 4-hydroxy-tetrahydrodipicolinate reductase (267 aa).

NAD(+) contacts are provided by residues 10 to 15 (GCGGRM) and Glu-36. Position 37 (Arg-37) interacts with NADP(+). Residues 99-101 (GTT) and 123-126 (APNF) each bind NAD(+). The Proton donor/acceptor role is filled by His-156. (S)-2,3,4,5-tetrahydrodipicolinate is bound at residue His-157. Catalysis depends on Lys-160, which acts as the Proton donor. 166–167 (GT) is a (S)-2,3,4,5-tetrahydrodipicolinate binding site.

It belongs to the DapB family.

The protein localises to the cytoplasm. It catalyses the reaction (S)-2,3,4,5-tetrahydrodipicolinate + NAD(+) + H2O = (2S,4S)-4-hydroxy-2,3,4,5-tetrahydrodipicolinate + NADH + H(+). The catalysed reaction is (S)-2,3,4,5-tetrahydrodipicolinate + NADP(+) + H2O = (2S,4S)-4-hydroxy-2,3,4,5-tetrahydrodipicolinate + NADPH + H(+). Its pathway is amino-acid biosynthesis; L-lysine biosynthesis via DAP pathway; (S)-tetrahydrodipicolinate from L-aspartate: step 4/4. Its function is as follows. Catalyzes the conversion of 4-hydroxy-tetrahydrodipicolinate (HTPA) to tetrahydrodipicolinate. This chain is 4-hydroxy-tetrahydrodipicolinate reductase, found in Laribacter hongkongensis (strain HLHK9).